The following is a 204-amino-acid chain: Holliday junction branch migration complex subunit RuvA (204 aa).

The domain I stretch occupies residues 1–64; it reads MIGHLTGRLV…EDAHLLFGFS (64 aa). The domain II stretch occupies residues 65 to 143; it reads QKTDRTLFRE…GIQQEDFFIE (79 aa). Residues 144–155 are flexible linker; it reads SQHLKQPEHALN. Residues 156-204 form a domain III region; that stretch reads EQDIPASEAISALIALGYKAAEAEKLVKKISKPALSSEQLIREALKAAL.

Belongs to the RuvA family. As to quaternary structure, homotetramer. Forms an RuvA(8)-RuvB(12)-Holliday junction (HJ) complex. HJ DNA is sandwiched between 2 RuvA tetramers; dsDNA enters through RuvA and exits via RuvB. An RuvB hexamer assembles on each DNA strand where it exits the tetramer. Each RuvB hexamer is contacted by two RuvA subunits (via domain III) on 2 adjacent RuvB subunits; this complex drives branch migration. In the full resolvosome a probable DNA-RuvA(4)-RuvB(12)-RuvC(2) complex forms which resolves the HJ.

It localises to the cytoplasm. The RuvA-RuvB-RuvC complex processes Holliday junction (HJ) DNA during genetic recombination and DNA repair, while the RuvA-RuvB complex plays an important role in the rescue of blocked DNA replication forks via replication fork reversal (RFR). RuvA specifically binds to HJ cruciform DNA, conferring on it an open structure. The RuvB hexamer acts as an ATP-dependent pump, pulling dsDNA into and through the RuvAB complex. HJ branch migration allows RuvC to scan DNA until it finds its consensus sequence, where it cleaves and resolves the cruciform DNA. The sequence is that of Holliday junction branch migration complex subunit RuvA from Pasteurella multocida (strain Pm70).